The following is a 227-amino-acid chain: Uracil-DNA glycosylase (227 aa).

Catalysis depends on D65, which acts as the Proton acceptor.

Belongs to the uracil-DNA glycosylase (UDG) superfamily. UNG family.

Its subcellular location is the cytoplasm. It carries out the reaction Hydrolyzes single-stranded DNA or mismatched double-stranded DNA and polynucleotides, releasing free uracil.. In terms of biological role, excises uracil residues from the DNA which can arise as a result of misincorporation of dUMP residues by DNA polymerase or due to deamination of cytosine. The chain is Uracil-DNA glycosylase from Lactobacillus delbrueckii subsp. bulgaricus (strain ATCC BAA-365 / Lb-18).